Here is a 362-residue protein sequence, read N- to C-terminus: Heme A synthase (362 aa).

5 helical membrane passes run 12 to 32, 102 to 122, 128 to 148, 159 to 179, and 198 to 218; these read AVKI…LVGG, VIGL…HLGG, LWLI…MVAS, ERLA…VWTL, and AAAL…VAGL. H262 lines the heme pocket. Helical transmembrane passes span 264-286, 291-311, and 314-334; these read MLAY…ARAG, GAVW…FTLL, and VPIG…MLGV. Residue H322 participates in heme binding.

It belongs to the COX15/CtaA family. Type 2 subfamily. Interacts with CtaB. Requires heme b as cofactor.

The protein localises to the cell membrane. The enzyme catalyses Fe(II)-heme o + 2 A + H2O = Fe(II)-heme a + 2 AH2. It functions in the pathway porphyrin-containing compound metabolism; heme A biosynthesis; heme A from heme O: step 1/1. In terms of biological role, catalyzes the conversion of heme O to heme A by two successive hydroxylations of the methyl group at C8. The first hydroxylation forms heme I, the second hydroxylation results in an unstable dihydroxymethyl group, which spontaneously dehydrates, resulting in the formyl group of heme A. In Rhodopseudomonas palustris (strain BisA53), this protein is Heme A synthase.